The primary structure comprises 362 residues: Atypical chemokine receptor 3 (362 aa).

The Extracellular segment spans residues 1–40 (MDLHLFDYAEPGNFSDISWPCNSSDCIVVDTVLCPNMPNK). Residues asparagine 13, asparagine 22, and asparagine 39 are each glycosylated (N-linked (GlcNAc...) asparagine). The chain crosses the membrane as a helical span at residues 41–61 (SVLLYTLSFIYIFIFVIGMIA). Residues 62 to 81 (NSVVVWVNIQAKTTGYDTHC) are Cytoplasmic-facing. A helical membrane pass occupies residues 82–102 (YILNLAIADLWVVVTIPVWVV). Residues 103-118 (SLVQHNQWPMGELTCK) are Extracellular-facing. An intrachain disulfide couples cysteine 117 to cysteine 196. The chain crosses the membrane as a helical span at residues 119–139 (ITHLIFSINLFGSIFFLTCMS). Over 140–162 (VDRYLSITYFASTSSRRKKVVRR) the chain is Cytoplasmic. A helical membrane pass occupies residues 163–183 (AVCVLVWLLAFCVSLPDTYYL). Over 184-213 (KTVTSASNNETYCRSFYPEHSVKEWLISME) the chain is Extracellular. A helical transmembrane segment spans residues 214–234 (LVSVVLGFAIPFCVIAVFYCL). The Cytoplasmic segment spans residues 235-252 (LARAISASSDQEKQSSRK). A helical membrane pass occupies residues 253–273 (IIFSYVVVFLVCWLPYHVVVL). At 274 to 296 (LDIFSILHYIPFTCQLENFLFTA) the chain is on the extracellular side. Residues 297–319 (LHVTQCLSLVHCCVNPVLYSFIN) form a helical membrane-spanning segment. At 320-362 (RNYRYELMKAFIFKYSAKTGLTKLIDASRVSETEYSALEQNAK) the chain is on the cytoplasmic side. A C-terminal cytoplasmic tail region spans residues 324–362 (YELMKAFIFKYSAKTGLTKLIDASRVSETEYSALEQNAK). Residues serine 347, serine 350, and serine 355 each carry the phosphoserine modification.

This sequence belongs to the G-protein coupled receptor 1 family. Atypical chemokine receptor subfamily. As to quaternary structure, homodimer. Can form heterodimers with CXCR4; heterodimerization may regulate CXCR4 signaling activity. Interacts with ARRB1 and ARRB2. In terms of processing, the Ser/Thr residues in the C-terminal cytoplasmic tail may be phosphorylated. Ubiquitinated at the Lys residues in its C-terminal cytoplasmic tail and is essential for correct trafficking from and to the cell membrane. Deubiquitinated by CXCL12-stimulation in a reversible manner.

The protein resides in the cell membrane. Its subcellular location is the early endosome. It is found in the recycling endosome. Atypical chemokine receptor that controls chemokine levels and localization via high-affinity chemokine binding that is uncoupled from classic ligand-driven signal transduction cascades, resulting instead in chemokine sequestration, degradation, or transcytosis. Also known as interceptor (internalizing receptor) or chemokine-scavenging receptor or chemokine decoy receptor. Acts as a receptor for chemokines CXCL11 and CXCL12/SDF1. Chemokine binding does not activate G-protein-mediated signal transduction but instead induces beta-arrestin recruitment, leading to ligand internalization and activation of MAPK signaling pathway. Required for regulation of CXCR4 protein levels in migrating interneurons, thereby adapting their chemokine responsiveness. In glioma cells, transduces signals via MEK/ERK pathway, mediating resistance to apoptosis. Promotes cell growth and survival. Not involved in cell migration, adhesion or proliferation of normal hematopoietic progenitors but activated by CXCL11 in malignant hemapoietic cells, leading to phosphorylation of ERK1/2 (MAPK3/MAPK1) and enhanced cell adhesion and migration. Plays a regulatory role in CXCR4-mediated activation of cell surface integrins by CXCL12. Required for heart valve development. Regulates axon guidance in the oculomotor system through the regulation of CXCL12 levels. This chain is Atypical chemokine receptor 3 (ACKR3), found in Canis lupus familiaris (Dog).